We begin with the raw amino-acid sequence, 423 residues long: UDP-N-acetylglucosamine 1-carboxyvinyltransferase (423 aa).

Position 22-23 (22-23 (KN)) interacts with phosphoenolpyruvate. Arg-93 contributes to the UDP-N-acetyl-alpha-D-glucosamine binding site. Cys-117 (proton donor) is an active-site residue. Cys-117 bears the 2-(S-cysteinyl)pyruvic acid O-phosphothioketal mark. UDP-N-acetyl-alpha-D-glucosamine contacts are provided by residues 122–126 (RPVDL), Asp-308, and Val-330.

This sequence belongs to the EPSP synthase family. MurA subfamily.

The protein resides in the cytoplasm. The catalysed reaction is phosphoenolpyruvate + UDP-N-acetyl-alpha-D-glucosamine = UDP-N-acetyl-3-O-(1-carboxyvinyl)-alpha-D-glucosamine + phosphate. The protein operates within cell wall biogenesis; peptidoglycan biosynthesis. Cell wall formation. Adds enolpyruvyl to UDP-N-acetylglucosamine. The sequence is that of UDP-N-acetylglucosamine 1-carboxyvinyltransferase from Finegoldia magna (strain ATCC 29328 / DSM 20472 / WAL 2508) (Peptostreptococcus magnus).